Reading from the N-terminus, the 841-residue chain is Probable outer membrane usher protein EcpC (841 aa).

Residues 1–29 (MPLRRFSPGLKAQFAFGMVFLFVQPDASA) form the signal peptide.

This sequence belongs to the EcpC/MatD family.

In terms of biological role, part of the ecpRABCDE operon, which encodes the E.coli common pilus (ECP). ECP is found in both commensal and pathogenic strains and plays a dual role in early-stage biofilm development and host cell recognition. The protein is Probable outer membrane usher protein EcpC (ecpC) of Escherichia coli O18:K1:H7 (strain IHE3034 / ExPEC).